Consider the following 382-residue polypeptide: S-adenosylmethionine synthase (382 aa).

ATP is bound at residue His16. Asp18 contributes to the Mg(2+) binding site. Residue Glu44 coordinates K(+). Residues Glu57 and Gln100 each coordinate L-methionine. The interval 100 to 110 (QSPDIAQGVDN) is flexible loop. ATP contacts are provided by residues 165–167 (DAK), 231–232 (RF), Asp240, 246–247 (RK), and Lys267. Asp240 is a binding site for L-methionine. Lys271 lines the L-methionine pocket.

It belongs to the AdoMet synthase family. In terms of assembly, homotetramer; dimer of dimers. Mg(2+) serves as cofactor. It depends on K(+) as a cofactor.

It is found in the cytoplasm. The enzyme catalyses L-methionine + ATP + H2O = S-adenosyl-L-methionine + phosphate + diphosphate. Its pathway is amino-acid biosynthesis; S-adenosyl-L-methionine biosynthesis; S-adenosyl-L-methionine from L-methionine: step 1/1. Catalyzes the formation of S-adenosylmethionine (AdoMet) from methionine and ATP. The overall synthetic reaction is composed of two sequential steps, AdoMet formation and the subsequent tripolyphosphate hydrolysis which occurs prior to release of AdoMet from the enzyme. This chain is S-adenosylmethionine synthase, found in Legionella pneumophila (strain Paris).